Here is an 86-residue protein sequence, read N- to C-terminus: DNA-directed RNA polymerase subunit omega (86 aa).

Residues 67 to 76 (SAREHAKESQ) are compositionally biased toward basic and acidic residues. The interval 67 to 86 (SAREHAKESQVSEEEVREES) is disordered. The span at 77-86 (VSEEEVREES) shows a compositional bias: acidic residues.

It belongs to the RNA polymerase subunit omega family. The RNAP catalytic core consists of 2 alpha, 1 beta, 1 beta' and 1 omega subunit. When a sigma factor is associated with the core the holoenzyme is formed, which can initiate transcription.

The catalysed reaction is RNA(n) + a ribonucleoside 5'-triphosphate = RNA(n+1) + diphosphate. In terms of biological role, promotes RNA polymerase assembly. Latches the N- and C-terminal regions of the beta' subunit thereby facilitating its interaction with the beta and alpha subunits. This is DNA-directed RNA polymerase subunit omega from Nitrosococcus oceani (strain ATCC 19707 / BCRC 17464 / JCM 30415 / NCIMB 11848 / C-107).